Consider the following 73-residue polypeptide: UPF0352 protein APL_0584 (73 aa).

The protein belongs to the UPF0352 family.

This is UPF0352 protein APL_0584 from Actinobacillus pleuropneumoniae serotype 5b (strain L20).